The chain runs to 230 residues: uncharacterized protein (230 aa).

The 68-residue stretch at 2–69 (HRLAKIISNA…KPRLWIYYKP (68 aa)) folds into the S4 RNA-binding domain. Catalysis depends on Asp102, which acts as the Nucleophile.

The protein belongs to the pseudouridine synthase RsuA family.

The enzyme catalyses a uridine in RNA = a pseudouridine in RNA. This is an uncharacterized protein from Rickettsia conorii (strain ATCC VR-613 / Malish 7).